The following is a 290-amino-acid chain: Zinc-finger homeodomain protein 2 (290 aa).

The span at 1-15 shows a compositional bias: acidic residues; that stretch reads MDFDDHDEGDGDEEM. The interval 1-59 is disordered; sequence MDFDDHDEGDGDEEMPPMPLSSGYDAPMQPGLGGGGGGVPKPGGGVGGGGGGGGGGGGG. Positions 31-59 are enriched in gly residues; sequence GLGGGGGGVPKPGGGVGGGGGGGGGGGGG. Residues 63–112 form a ZF-HD dimerization-type; degenerate zinc finger; the sequence is YRECLKNHAVGIGGHAVDGCGEFMASGEEGSIDALRCAACGCHRNFHRKE. The homeobox DNA-binding region spans 226–289; it reads KKRFRTKFTQ…NNKHTLGKKA (64 aa).

In terms of assembly, homo- and heterodimer with other ZFHD proteins.

It is found in the nucleus. Its function is as follows. Putative transcription factor. The polypeptide is Zinc-finger homeodomain protein 2 (ZHD2) (Oryza sativa subsp. japonica (Rice)).